A 217-amino-acid polypeptide reads, in one-letter code: Ras-related protein RGP2 (217 aa).

Residues 19-26 (GDSGVGKS), 67-71 (DTAGQ), and 125-128 (NKSD) each bind GTP. S-geranylgeranyl cysteine attachment occurs at residues Cys214 and Cys215.

It belongs to the small GTPase superfamily. Rab family.

The protein resides in the cell membrane. The protein is Ras-related protein RGP2 (RGP2) of Oryza sativa subsp. japonica (Rice).